Consider the following 293-residue polypeptide: Exosome complex component RRP4 (293 aa).

The region spanning 79 to 159 is the S1 motif domain; that stretch reads EVGDIVVGRI…SDGAVSLHTR (81 aa). S124 carries the phosphoserine modification.

This sequence belongs to the RRP4 family. Component of the RNA exosome core complex (Exo-9), composed of EXOSC1, EXOSC2, EXOSC3, EXOSC4, EXOSC5, EXOSC6, EXOSC7, EXOSC8 and EXOSC9; within the complex interacts with EXOSC4 and EXOSC7. The catalytically inactive RNA exosome core complex (Exo-9) associates with the catalytic subunit EXOSC10/RRP6. Exo-9 may associate with DIS3 to form the nucleolar exosome complex, or DIS3L to form the cytoplasmic exosome complex. Exo-9 is formed by a hexameric base ring consisting of the heterodimers EXOSC4-EXOSC9, EXOSC5-EXOSC8 and EXOSC6-EXOSC7, and a cap ring consisting of EXOSC1, EXOSC2 and EXOSC3. The RNA exosome complex associates with cofactors C1D/RRP47, MPHOSPH6/MPP6 and MTREX/MTR4. Interacts with GTPBP1. Interacts with ZFP36L1 (via N-terminus).

Its subcellular location is the cytoplasm. The protein resides in the nucleus. The protein localises to the nucleolus. Functionally, non-catalytic component of the RNA exosome complex which has 3'-&gt;5' exoribonuclease activity and participates in a multitude of cellular RNA processing and degradation events. In the nucleus, the RNA exosome complex is involved in proper maturation of stable RNA species such as rRNA, snRNA and snoRNA, in the elimination of RNA processing by-products and non-coding 'pervasive' transcripts, such as antisense RNA species and promoter-upstream transcripts (PROMPTs), and of mRNAs with processing defects, thereby limiting or excluding their export to the cytoplasm. The RNA exosome may be involved in Ig class switch recombination (CSR) and/or Ig variable region somatic hypermutation (SHM) by targeting AICDA deamination activity to transcribed dsDNA substrates. In the cytoplasm, the RNA exosome complex is involved in general mRNA turnover and specifically degrades inherently unstable mRNAs containing AU-rich elements (AREs) within their 3' untranslated regions, and in RNA surveillance pathways, preventing translation of aberrant mRNAs. It seems to be involved in degradation of histone mRNA. The catalytic inactive RNA exosome core complex of 9 subunits (Exo-9) is proposed to play a pivotal role in the binding and presentation of RNA for ribonucleolysis, and to serve as a scaffold for the association with catalytic subunits and accessory proteins or complexes. EXOSC2 as peripheral part of the Exo-9 complex stabilizes the hexameric ring of RNase PH-domain subunits through contacts with EXOSC4 and EXOSC7. The chain is Exosome complex component RRP4 from Homo sapiens (Human).